The following is a 44-amino-acid chain: Photosystem I reaction center subunit IX (44 aa).

A helical transmembrane segment spans residues 7 to 27; it reads YLSVAPVVSTLWFAALAGLLI.

The protein belongs to the PsaJ family.

Its subcellular location is the plastid. The protein resides in the chloroplast thylakoid membrane. Its function is as follows. May help in the organization of the PsaE and PsaF subunits. This Lotus japonicus (Lotus corniculatus var. japonicus) protein is Photosystem I reaction center subunit IX.